The sequence spans 364 residues: Long-wave-sensitive opsin 1 (364 aa).

Topologically, residues 1–52 (MTQRWGPQRLAGGQPHAGLEDSTRASIFTYTNSNATRGPFEGPNYHIAPRWV) are extracellular. O-linked (GlcNAc) serine glycosylation occurs at serine 22. Asparagine 34 is a glycosylation site (N-linked (GlcNAc...) asparagine). A helical membrane pass occupies residues 53-77 (YHVTSAWMIFVVIASVFTNGLVLAA). Residues 78-89 (TMKFKKLRHPLN) are Cytoplasmic-facing. Residues 90–115 (WILVNLAVADLAETIIASTISVVNQI) form a helical membrane-spanning segment. At 116 to 129 (YGYFVLGHPMCVLE) the chain is on the extracellular side. Cysteine 126 and cysteine 203 are oxidised to a cystine. The helical transmembrane segment at 130–149 (GYTVSLCGITGLWSLAIISW) threads the bilayer. At 150–168 (ERWLVVCKPFGNVRFDAKL) the chain is on the cytoplasmic side. Residues 169–192 (AIAGIAFSWIWAAVWTAPPIFGWS) form a helical membrane-spanning segment. The Extracellular portion of the chain corresponds to 193–218 (RYWPHGLKTSCGPDVFSGSSYPGVQS). A helical membrane pass occupies residues 219–246 (YMIVLMITCCIIPLSVIVLCYLQVWLAI). The Cytoplasmic segment spans residues 247–268 (RAVAKQQKESESTQKAEKEVTR). Residues 269-292 (MVMVMIFAYCVCWGPYTFFACFAA) traverse the membrane as a helical segment. The Extracellular segment spans residues 293-300 (AHPGYAFH). The helical transmembrane segment at 301–325 (PLVAALPAYFAKSATIYNPIIYVFM) threads the bilayer. Lysine 312 bears the N6-(retinylidene)lysine mark. The Cytoplasmic segment spans residues 326–364 (NRQFRNCIMQLFGKKVDDGSELSSASRTEASSVSSVSPA).

The protein belongs to the G-protein coupled receptor 1 family. Opsin subfamily. Phosphorylated on some or all of the serine and threonine residues present in the C-terminal region. As to expression, the three color pigments are found in the cone photoreceptor cells. Expressed in retina.

Its subcellular location is the membrane. Visual pigments are the light-absorbing molecules that mediate vision. They consist of an apoprotein, opsin, covalently linked to cis-retinal. The chain is Long-wave-sensitive opsin 1 (OPN1LW) from Felis catus (Cat).